Here is a 111-residue protein sequence, read N- to C-terminus: uncharacterized protein (111 aa).

It localises to the mitochondrion. This is an uncharacterized protein from Arabidopsis thaliana (Mouse-ear cress).